Here is a 45-residue protein sequence, read N- to C-terminus: Thymosin beta (45 aa).

The disordered stretch occupies residues 1–45; the sequence is MADKPNMTEITSFDKTKLRKTETQEKNPLPTKETIEQERQGESTP. 2 stretches are compositionally biased toward basic and acidic residues: residues 12 to 25 and 33 to 45; these read SFDK…ETQE and ETIE…ESTP.

It belongs to the thymosin beta family.

Its subcellular location is the cytoplasm. It is found in the cytoskeleton. Its function is as follows. Plays an important role in the organization of the cytoskeleton. Binds to and sequesters actin monomers (G actin) and therefore inhibits actin polymerization. The sequence is that of Thymosin beta (tmsb) from Danio rerio (Zebrafish).